A 768-amino-acid chain; its full sequence is MSNEVETSTTNGQPDQQAAPKAPSKKEKKKGSEKTDEYLLARFKGDGVKYKAKLIGIDDVPDARGDKMSQDSMMKLKGMAAAGRSQGQHKQRIWVNISLSGIKIIDEKTGVIEHEHPVNKISFIARDVTDNRAFGYVCGGEGQHQFFAIKTGQQAEPLVVDLKDLFQVIYNVKKKEEEKKKVEEANKAEENGSEALMTLDDQANKLKLGVDQMDLFGDMSTPPDLNNPTESRDILLVDLNSEIDTNQNSLRENPFLTNGVTSCSLPRPKPQASFLPESAFSANLNFFPTPNPDPFRDDPFAQPDQSAPSSFHSLTSADQKKANPGSLSTPQSKGPLNGDTDYFGQQFDQISNRTGKQEAQGGPWPYPSSQTQQAVRTQNGVSEKEQNGFHIKSSPNPFVGSPPKGLSVPNGVKQDLESSVQSSAHDSIAIIPPPQSTKPGRGRRTAKSSANDLLASDIFASEPPGQMSPTGQPAVPQANFMDLFKTSAPAPMGSGPLVGLGTVPVTPPQAGPWTPVVFTPSTTVVPGAIISGQPSGFGQPLVFGTTPAVQVWNQPSSFATAASPPPPAVWCPTTSVAPNTWSSTSPLGNPFQSSNIFPPSTISTQSFPQPMMSSVLVTPPQPPPRNGPLKDTLSDAFTGLDPLGDKEVKEVKEMFKDFQLRQPPLVPSRKGETPSSGTSSAFSSYFNNKVGIPQEHVDHDDFDANQLLNKINEPPKPAPRQGVLSGTKSADNSLENPFSKGFSSTNPSVVSQPASSDAHRSPFGNPFA.

The segment covering 1–16 (MSNEVETSTTNGQPDQ) has biased composition (polar residues). Residues 1-36 (MSNEVETSTTNGQPDQQAAPKAPSKKEKKKGSEKTD) form a disordered region. Ser2 bears the N-acetylserine mark. Phosphoserine is present on Ser2. Positions 45–196 (GDGVKYKAKL…KAEENGSEAL (152 aa)) constitute a PID domain. Position 170 is a phosphotyrosine (Tyr170). Phosphoserine is present on Ser193. The segment at 230 to 447 (ESRDILLVDL…KPGRGRRTAK (218 aa)) is required for localization to clathrin-coated pits. A disordered region spans residues 285–449 (NFFPTPNPDP…GRGRRTAKSS (165 aa)). 2 short sequence motifs (DPF) span residues 293-295 (DPF) and 298-300 (DPF). Polar residues-rich tracts occupy residues 303–317 (PDQSAPSSFHSLTSA), 325–334 (GSLSTPQSKG), and 367–381 (PSSQTQQAVRTQNGV). Phosphoserine; in mitosis occurs at positions 326 and 328. Ser401 bears the Phosphoserine mark. The tract at residues 601-731 (TISTQSFPQP…GVLSGTKSAD (131 aa)) is sufficient for interaction with GRB2. Positions 619–627 (PPQPPPRNG) are required for interaction with CSK. The required for interaction with MYO6 stretch occupies residues 649–768 (KEVKEMFKDF…HRSPFGNPFA (120 aa)). Disordered regions lie at residues 660–682 (LRQPPLVPSRKGETPSSGTSSAF) and 709–768 (NKIN…NPFA). Residues 663–671 (PPLVPSRKG) form a required for interaction with GRB2 and CSK region. Residue Thr673 is modified to Phosphothreonine. Residue Ser675 is modified to Phosphoserine. The sufficient for interaction with SH3KBP1 SH3 domain stretch occupies residues 708 to 724 (LNKINEPPKPAPRQGVL). Positions 724–755 (LSGTKSADNSLENPFSKGFSSTNPSVVSQPAS) are enriched in polar residues. Phosphoserine is present on residues Ser729 and Ser761.

In terms of assembly, can interact (via PID domain) with LDLR, APP, APLP1 and APLP2, and weakly with INPP5D (via NPXY motifs); the interaction is impaired by tyrosine phosphorylation of the respective NPXY motifs. Can weakly interact (via PID domain) with LRP1 (via NPXY motif); the interaction is enhanced by tyrosine phosphorylation of the NPXY motif. Interacts with LRP2 (via NPXY motif); the interaction is not affected by tyrosine phosphorylation of the NPXY motif. Interacts with clathrin; in vitro can assemble clathrin triskelia into polyhedral coats. Interacts with AP2A2, ITGB1, ITGB3, ITGB5, PIAS2, DAB2IP, NOSTRIN, FCHO1, DVL3, EPS15, ITSN1 and EPS15L1. Interacts with SH3KBP1 (via SH3 domains). Interacts with GRB2; competes with SOS1 for binding to GRB2 and the interaction is enhanced by EGF and NT-3 stimulation. Interacts with MAP3K7; the interaction is induced by TGF-beta stimulation and may mediate TGF-beta stimulated JNK activation. Interacts with AXIN1 and PPP1CA; the interactions are mutually exclusive. Interacts with the globular tail of MYO6. Interacts (via DPF motifs) with FCHO2; the interaction is direct and required for DAB2-mediated LDLR endocytosis. Interacts with LRP6; the interaction involves LRP6 phosphorylation by CK2 and sequesters LRP6 towards clathrin-mediated endocytosis. Associates with the TGF-beta receptor complex. Interacts with SMAD2 and SMAD3; the interactions are enhanced upon TGF-beta stimulation. Interacts with GRB2; the interaction is enhanced by EGF and NT-3 stimulation. Interacts with SRC; the interaction is enhanced by EGF stimulation. Interacts with GRB2; the interaction is enhanced by EGF and NT-3 stimulation. Interacts (via NPXY motif) with DAB2 (via PID domain). In terms of processing, phosphorylated. Phosphorylation during mitosis is leading to membrane displacement. There is some ambiguity for the mitotic phosphosite Ser-326/328. As to expression, prostate.

It is found in the cytoplasm. The protein resides in the cytoplasmic vesicle. It localises to the clathrin-coated vesicle membrane. The protein localises to the membrane. Its subcellular location is the clathrin-coated pit. In terms of biological role, adapter protein that functions as a clathrin-associated sorting protein (CLASP) required for clathrin-mediated endocytosis of selected cargo proteins. Can bind and assemble clathrin, and binds simultaneously to phosphatidylinositol 4,5-bisphosphate (PtdIns(4,5)P2) and cargos containing non-phosphorylated NPXY internalization motifs, such as the LDL receptor, to recruit them to clathrin-coated pits. Can function in clathrin-mediated endocytosis independently of the AP-2 complex. Involved in endocytosis of integrin beta-1; this function seems to redundant with the AP-2 complex and seems to require DAB2 binding to endocytosis accessory EH domain-containing proteins such as EPS15, EPS15L1 and ITSN1. Involved in endocytosis of cystic fibrosis transmembrane conductance regulator/CFTR. Involved in endocytosis of megalin/LRP2 lipoprotein receptor during embryonal development. Required for recycling of the TGF-beta receptor. Involved in CFTR trafficking to the late endosome. Involved in several receptor-mediated signaling pathways. Involved in TGF-beta receptor signaling and facilitates phosphorylation of the signal transducer SMAD2. Mediates TFG-beta-stimulated JNK activation. May inhibit the canoniocal Wnt/beta-catenin signaling pathway by stabilizing the beta-catenin destruction complex through a competing association with axin preventing its dephosphorylation through protein phosphatase 1 (PP1). Sequesters LRP6 towards clathrin-mediated endocytosis, leading to inhibition of Wnt/beta-catenin signaling. May activate non-canonical Wnt signaling. In cell surface growth factor/Ras signaling pathways proposed to inhibit ERK activation by interrupting the binding of GRB2 to SOS1 and to inhibit SRC by preventing its activating phosphorylation at 'Tyr-419'. Proposed to be involved in modulation of androgen receptor (AR) signaling mediated by SRC activation; seems to compete with AR for interaction with SRC. Plays a role in the CSF-1 signal transduction pathway. Plays a role in cellular differentiation. Involved in cell positioning and formation of visceral endoderm (VE) during embryogenesis and proposed to be required in the VE to respond to Nodal signaling coming from the epiblast. Required for the epithelial to mesenchymal transition, a process necessary for proper embryonic development. May be involved in myeloid cell differentiation and can induce macrophage adhesion and spreading. May act as a tumor suppressor. The sequence is that of Disabled homolog 2 (Dab2) from Rattus norvegicus (Rat).